The primary structure comprises 137 residues: Basic phospholipase A2 homolog 2 (137 aa).

Positions 1–16 are cleaved as a signal peptide; that stretch reads MRTLWIMAVLLVGVEG. 7 cysteine pairs are disulfide-bonded: Cys-42/Cys-131, Cys-44/Cys-60, Cys-59/Cys-111, Cys-65/Cys-137, Cys-66/Cys-104, Cys-73/Cys-97, and Cys-91/Cys-102. An important for membrane-damaging activities in eukaryotes and bacteria; heparin-binding region spans residues 121 to 133; the sequence is KKYRYYLKPLCKK.

Belongs to the phospholipase A2 family. Group II subfamily. K49 sub-subfamily. Homodimer; non-covalently linked. Binds to heparin. It binds long-chain fatty acids covalently by a rapid, spontaneous, and autocatalytic process. When acylated, it binds to the surface of liposomes and isolated muscle membranes, with the fatty acid moiety inserted into the lipid bilayer and possibly acting as an anchor. Expressed by the venom gland.

It localises to the secreted. Heparin inhibits the myotoxic activity. Suramin inhibits the myotoxic activity. High level of membrane cholesterol content reduces cytolytic activity, whereas low level of membrane cholesterol content increases cytolytic activity. Its function is as follows. Snake venom phospholipase A2 homolog that lacks enzymatic activity. Is myotoxic and induces a dose-dependent edema in the mouse foot pad. Also exhibits strong anticoagulant effects by binding to factor Xa (F10) and inhibiting the prothrombinase activity (IC(50) is 3 nM). In addition, it shows cytotoxic activity to a variety of cell types and bactericidal activity to a variety of Gram-negative and Gram-positive bacteria. Also induces a very rapid release of large amounts of potassium ions and ATP from muscle cells, which accounts for the pain reaction characteristic of viperid envenomations. The released ATP amplifies the effect of the myotoxins, acting as a 'danger signal', which spreads and causes further damage by acting on purinergic receptors. A model of myotoxic mechanism has been proposed: an apo Lys49-PLA2 is activated by the entrance of a hydrophobic molecule (e.g. fatty acid) at the hydrophobic channel of the protein leading to a reorientation of a monomer. This reorientation causes a transition between 'inactive' to 'active' states, causing alignment of C-terminal and membrane-docking sites (MDoS) side-by-side and putting the membrane-disruption sites (MDiS) in the same plane, exposed to solvent and in a symmetric position for both monomers. The MDoS region stabilizes the toxin on membrane by the interaction of charged residues with phospholipid head groups. Subsequently, the MDiS region destabilizes the membrane with penetration of hydrophobic residues. This insertion causes a disorganization of the membrane, allowing an uncontrolled influx of ions (i.e. calcium and sodium), and eventually triggering irreversible intracellular alterations and cell death. The polypeptide is Basic phospholipase A2 homolog 2 (Bothrops asper (Terciopelo)).